The sequence spans 483 residues: Glucose-1-phosphate adenylyltransferase large subunit 3, chloroplastic/amyloplastic (483 aa).

This sequence belongs to the bacterial/plant glucose-1-phosphate adenylyltransferase family. As to quaternary structure, heterotetramer. In terms of tissue distribution, tubers.

The protein localises to the plastid. Its subcellular location is the chloroplast. It localises to the amyloplast. It catalyses the reaction alpha-D-glucose 1-phosphate + ATP + H(+) = ADP-alpha-D-glucose + diphosphate. Its pathway is glycan biosynthesis; starch biosynthesis. With respect to regulation, activated by 3'phosphoglycerate, inhibited by orthophosphate. Allosteric regulation. In terms of biological role, this protein plays a role in synthesis of starch. It catalyzes the synthesis of the activated glycosyl donor, ADP-glucose from Glc-1-P and ATP. In Solanum tuberosum (Potato), this protein is Glucose-1-phosphate adenylyltransferase large subunit 3, chloroplastic/amyloplastic (AGPS3).